The chain runs to 286 residues: MSLTSRLYKLRLSSLHSFGSLPILPPPLRSSRIAAPLSLRVSLSTRSIATSIAMGEAADAGMDAVQRRLMFDDECILVDEVDRVVGHESKYNCHMWEKIESGNMLHRAFSVFLFNSKFELLLQQRSATKVTFPLVWTNTCCSHPLYRESELIDENNLGVRNAAQRKLLDELGIPAEDVPVDEFTPLSRMLYKAPSDGKWGEHELDYLLFIVRDVAVHPNPDEVAEIKYVNREQLKELLKKADAGEEGLKLSPWFRLVVDNFLPKWWDHVEKGTLSEAVDMKSIHKL.

The 153-residue stretch at 104–256 (MLHRAFSVFL…GLKLSPWFRL (153 aa)) folds into the Nudix hydrolase domain. Catalysis depends on residues Cys-141 and Glu-203.

Belongs to the IPP isomerase type 1 family.

It catalyses the reaction isopentenyl diphosphate = dimethylallyl diphosphate. It participates in isoprenoid biosynthesis; dimethylallyl diphosphate biosynthesis; dimethylallyl diphosphate from isopentenyl diphosphate: step 1/1. It functions in the pathway porphyrin-containing compound metabolism; chlorophyll biosynthesis. Functionally, catalyzes the 1,3-allylic rearrangement of the homoallylic substrate isopentenyl (IPP) to its highly electrophilic allylic isomer, dimethylallyl diphosphate (DMAPP). The protein is Isopentenyl-diphosphate Delta-isomerase II (IPI2) of Clarkia breweri (Fairy fans).